The sequence spans 550 residues: Dihydroxy-acid dehydratase (550 aa).

Residue Asp78 coordinates Mg(2+). Residue Cys119 participates in [2Fe-2S] cluster binding. Residues Asp120 and Lys121 each coordinate Mg(2+). Lys121 is modified (N6-carboxylysine). Cys191 contacts [2Fe-2S] cluster. Residue Glu440 participates in Mg(2+) binding. Ser466 serves as the catalytic Proton acceptor.

Belongs to the IlvD/Edd family. Homodimer. The cofactor is [2Fe-2S] cluster. Requires Mg(2+) as cofactor.

The enzyme catalyses (2R)-2,3-dihydroxy-3-methylbutanoate = 3-methyl-2-oxobutanoate + H2O. The catalysed reaction is (2R,3R)-2,3-dihydroxy-3-methylpentanoate = (S)-3-methyl-2-oxopentanoate + H2O. It functions in the pathway amino-acid biosynthesis; L-isoleucine biosynthesis; L-isoleucine from 2-oxobutanoate: step 3/4. The protein operates within amino-acid biosynthesis; L-valine biosynthesis; L-valine from pyruvate: step 3/4. In terms of biological role, functions in the biosynthesis of branched-chain amino acids. Catalyzes the dehydration of (2R,3R)-2,3-dihydroxy-3-methylpentanoate (2,3-dihydroxy-3-methylvalerate) into 2-oxo-3-methylpentanoate (2-oxo-3-methylvalerate) and of (2R)-2,3-dihydroxy-3-methylbutanoate (2,3-dihydroxyisovalerate) into 2-oxo-3-methylbutanoate (2-oxoisovalerate), the penultimate precursor to L-isoleucine and L-valine, respectively. The chain is Dihydroxy-acid dehydratase from Methanococcus maripaludis (strain C7 / ATCC BAA-1331).